A 429-amino-acid polypeptide reads, in one-letter code: Cyclin-B2-1 (429 aa).

The protein belongs to the cyclin family. Cyclin AB subfamily. In terms of assembly, interacts with CDC20-1 and CDC20-2. In terms of tissue distribution, expressed in roots, stems, leaves, flowers and siliques.

The protein is Cyclin-B2-1 (CYCB2-1) of Arabidopsis thaliana (Mouse-ear cress).